Consider the following 138-residue polypeptide: UPF0251 protein Dole_1957 (138 aa).

This sequence belongs to the UPF0251 family.

This Desulfosudis oleivorans (strain DSM 6200 / JCM 39069 / Hxd3) (Desulfococcus oleovorans) protein is UPF0251 protein Dole_1957.